The following is a 426-amino-acid chain: Growth-regulating factor 9 (426 aa).

Positions 92 to 127 constitute a QLQ domain; the sequence is PFTPSQWMELEHQALIYKYLNAKAPIPSSLLISISK. Residues 151–195 form the WRC domain; sequence DPEPGRCRRTDGKKWRCSKEAMADHKYCERHINRNRHRSRKPVEN. 2 consecutive short sequence motifs (bipartite nuclear localization signal) follow at residues 156-166 and 184-191; these read RCRRTDGKKWR and RNRHRSRK. The disordered stretch occupies residues 184–222; sequence RNRHRSRKPVENQSRKTVKETPCAGSLPSSVGQGSFKKA. The span at 191 to 202 shows a compositional bias: basic and acidic residues; that stretch reads KPVENQSRKTVK.

Belongs to the GRF family.

It is found in the nucleus. Functionally, transcription activator that plays a regulatory role in gibberellin-induced stem elongation. In Oryza sativa subsp. japonica (Rice), this protein is Growth-regulating factor 9 (GRF9).